We begin with the raw amino-acid sequence, 225 residues long: Endoglucanase (225 aa).

The N-terminal stretch at 1-15 (MKVFVVLAAIVAIAN) is a signal peptide. The active-site Nucleophile is the Asp29. Cystine bridges form between Cys30–Cys152, Cys31–Cys66, Cys35–Cys103, Cys50–Cys74, Cys104–Cys219, Cys106–Cys209, and Cys176–Cys187. N-linked (GlcNAc...) asparagine glycosylation occurs at Asn55. The active-site Proton donor is the Asp138.

The protein belongs to the glycosyl hydrolase 45 (cellulase K) family. N- and O-glycosylated. Contains hybrid- and complex-type N-glycans.

It is found in the secreted. The enzyme catalyses Endohydrolysis of (1-&gt;4)-beta-D-glucosidic linkages in cellulose, lichenin and cereal beta-D-glucans.. With respect to regulation, activity is not affected by metal ions except Mn(2+), which reduces the activity by 40-50%. However, no significant change in activity in response to 1 mM EDTA. Functionally, hydrolyzes carboxymethylcellulose (CMC). Also hydrolyzes lichenan and barley beta-1,4-D-glucan. CMC is hydrolyzed majorily to cellobiose (G2), cellotriose (G3) and cellotetraose (G4). Cellohexaose (G6) is hydrolyzed to G4 and G2 with traces of G3. Cellopentaose (G5) is completely hydrolyzed to G2 and G3, and G4 is partially hydrolyzed to G2. Does not hydrolyze G2 or G3. Does not hydrolyze crystalline cellulose, soluble starch, xylan, mannan or laminarin. The protein is Endoglucanase of Cryptopygus antarcticus (Antarctic springtail).